The primary structure comprises 203 residues: Large ribosomal subunit protein uL13 (203 aa).

The residue at position 2 (alanine 2) is an N-acetylalanine. Arginine 59 carries the post-translational modification Citrulline. Residue serine 77 is modified to Phosphoserine; by ZIPK/DAPK3. Residue arginine 140 is modified to Citrulline. Lysine 191 carries the N6-acetyllysine modification.

Belongs to the universal ribosomal protein uL13 family. Component of the 60S ribosome. Component of the GAIT complex. Interacts with EIF4G1. Post-translationally, phosphorylation at Ser-77 upon interferon-gamma treatment in monocytes involves a DAPK1-DAPK3 kinase cascade and is causing release from the ribosome, association with the GAIT complex and subsequent involvement in transcript-selective translation inhibition. In terms of processing, citrullinated by PADI4.

The protein resides in the cytoplasm. Its function is as follows. Associated with ribosomes but is not required for canonical ribosome function and has extra-ribosomal functions. Component of the GAIT (gamma interferon-activated inhibitor of translation) complex which mediates interferon-gamma-induced transcript-selective translation inhibition in inflammation processes. Upon interferon-gamma activation and subsequent phosphorylation dissociates from the ribosome and assembles into the GAIT complex which binds to stem loop-containing GAIT elements in the 3'-UTR of diverse inflammatory mRNAs (such as ceruplasmin) and suppresses their translation. In the GAIT complex interacts with m7G cap-bound eIF4G at or near the eIF3-binding site and blocks the recruitment of the 43S ribosomal complex. Involved in methylation of rRNA. This is Large ribosomal subunit protein uL13 (RPL13A) from Homo sapiens (Human).